The chain runs to 398 residues: Acetate kinase (398 aa).

Asparagine 10 is a binding site for Mg(2+). Lysine 17 serves as a coordination point for ATP. Residue arginine 91 participates in substrate binding. The Proton donor/acceptor role is filled by aspartate 148. ATP contacts are provided by residues 208–212, 283–285, and 331–335; these read HLGNG, DCR, and GIGEN. Glutamate 385 is a Mg(2+) binding site.

The protein belongs to the acetokinase family. As to quaternary structure, homodimer. Mg(2+) is required as a cofactor. Requires Mn(2+) as cofactor.

It localises to the cytoplasm. It carries out the reaction acetate + ATP = acetyl phosphate + ADP. It participates in metabolic intermediate biosynthesis; acetyl-CoA biosynthesis; acetyl-CoA from acetate: step 1/2. Catalyzes the formation of acetyl phosphate from acetate and ATP. Can also catalyze the reverse reaction. The protein is Acetate kinase of Shewanella woodyi (strain ATCC 51908 / MS32).